The following is a 455-amino-acid chain: 3-isopropylmalate dehydratase large subunit (455 aa).

Positions 336, 396, and 399 each coordinate [4Fe-4S] cluster.

This sequence belongs to the aconitase/IPM isomerase family. LeuC type 1 subfamily. Heterodimer of LeuC and LeuD. It depends on [4Fe-4S] cluster as a cofactor.

It carries out the reaction (2R,3S)-3-isopropylmalate = (2S)-2-isopropylmalate. It participates in amino-acid biosynthesis; L-leucine biosynthesis; L-leucine from 3-methyl-2-oxobutanoate: step 2/4. Functionally, catalyzes the isomerization between 2-isopropylmalate and 3-isopropylmalate, via the formation of 2-isopropylmaleate. The sequence is that of 3-isopropylmalate dehydratase large subunit from Staphylococcus aureus (strain MRSA252).